The chain runs to 846 residues: Protein kintoun (846 aa).

Disordered regions lie at residues Thr216–Glu240, Leu372–Ala405, Gln574–Cys631, and Lys762–Asp846. Basic and acidic residues predominate over residues Leu372 to Val382. Phosphoserine is present on Ser380. The span at Pro391–Leu400 shows a compositional bias: acidic residues. Residues Gly583 to His603 are compositionally biased toward basic and acidic residues. Composition is skewed to basic residues over residues Lys611–Lys622 and Lys762–Gln776. Ser780 is subject to Phosphoserine. A compositionally biased stretch (polar residues) spans Leu795–Asn809.

This sequence belongs to the PIH1 family. Kintoun subfamily. In terms of assembly, interacts with Pp1alpha-96A, Pp1-87B, Pp1-13C and flw.

It is found in the cytoplasm. Functionally, required for cytoplasmic pre-assembly of axonemal dyneins, thereby playing a central role in motility in cilia and flagella. Involved in pre-assembly of dynein arm complexes in the cytoplasm before intraflagellar transport loads them for the ciliary compartment. The chain is Protein kintoun from Drosophila yakuba (Fruit fly).